The chain runs to 449 residues: Methylenetetrahydrofolate--tRNA-(uracil-5-)-methyltransferase TrmFO (449 aa).

FAD is bound at residue 9 to 14 (GGGMAG).

The protein belongs to the MnmG family. TrmFO subfamily. It depends on FAD as a cofactor.

It is found in the cytoplasm. It catalyses the reaction uridine(54) in tRNA + (6R)-5,10-methylene-5,6,7,8-tetrahydrofolate + NADH + H(+) = 5-methyluridine(54) in tRNA + (6S)-5,6,7,8-tetrahydrofolate + NAD(+). It carries out the reaction uridine(54) in tRNA + (6R)-5,10-methylene-5,6,7,8-tetrahydrofolate + NADPH + H(+) = 5-methyluridine(54) in tRNA + (6S)-5,6,7,8-tetrahydrofolate + NADP(+). In terms of biological role, catalyzes the folate-dependent formation of 5-methyl-uridine at position 54 (M-5-U54) in all tRNAs. This is Methylenetetrahydrofolate--tRNA-(uracil-5-)-methyltransferase TrmFO from Ruegeria pomeroyi (strain ATCC 700808 / DSM 15171 / DSS-3) (Silicibacter pomeroyi).